A 327-amino-acid polypeptide reads, in one-letter code: MADGELNVDSLISRLLEVRGCRPGKIVQMTEAEVRGLCIKSREIFLSQPILLELEAPLKICGDIHGQYTDLLRLFEYGGFPPEANYLFLGDYVDRGKQSLETICLLLAYKIKYPENFFLLRGNHECASINRIYGFYDECKRRFNIKLWKTFTDCFNCLPIAAIVDEKIFCCHGGLSPDLQSMEQIRRIMRPTDVPDTGLLCDLLWSDPDKDVQGWGENDRGVSFTFGADVVSKFLNRHDLDLICRAHQVVEDGYEFFAKRQLVTLFSAPNYCGEFDNAGGMMSVDETLMCSFQILKPSEKKAKYQYGGLNSGRPVTPPRTANPPKKR.

Residue A2 is modified to N-acetylalanine. Residues D63, H65, D91, and N123 each coordinate Mn(2+). Residue H124 is the Proton donor of the active site. H172 and H247 together coordinate Mn(2+). A disordered region spans residues Q305–R327.

Belongs to the PPP phosphatase family. PP-1 subfamily. Mn(2+) is required as a cofactor.

Its subcellular location is the cytoplasm. The protein resides in the nucleus. It catalyses the reaction O-phospho-L-seryl-[protein] + H2O = L-seryl-[protein] + phosphate. It carries out the reaction O-phospho-L-threonyl-[protein] + H2O = L-threonyl-[protein] + phosphate. In terms of biological role, protein phosphatase that associates with over 200 regulatory proteins to form highly specific holoenzymes which dephosphorylate hundreds of biological targets. Protein phosphatase (PP1) is essential for cell division, it participates in the regulation of glycogen metabolism, muscle contractility and protein synthesis. Involved in regulation of ionic conductances and long-term synaptic plasticity. The sequence is that of Serine/threonine-protein phosphatase PP1-beta catalytic subunit (ppp1cb) from Xenopus laevis (African clawed frog).